Reading from the N-terminus, the 93-residue chain is Putative pterin-4-alpha-carbinolamine dehydratase (93 aa).

The protein belongs to the pterin-4-alpha-carbinolamine dehydratase family.

It catalyses the reaction (4aS,6R)-4a-hydroxy-L-erythro-5,6,7,8-tetrahydrobiopterin = (6R)-L-erythro-6,7-dihydrobiopterin + H2O. The chain is Putative pterin-4-alpha-carbinolamine dehydratase from Trichormus variabilis (strain ATCC 29413 / PCC 7937) (Anabaena variabilis).